The following is a 340-amino-acid chain: Fructose-bisphosphate aldolase (340 aa).

Ser53 is a D-glyceraldehyde 3-phosphate binding site. Asp95 serves as the catalytic Proton donor. Zn(2+)-binding residues include His96, Asp131, Glu161, and His212. Gly213 serves as a coordination point for dihydroxyacetone phosphate. His249 contributes to the Zn(2+) binding site. Dihydroxyacetone phosphate-binding positions include 250 to 252 (GGS) and 271 to 274 (NLDT).

It belongs to the class II fructose-bisphosphate aldolase family. The cofactor is Zn(2+).

The enzyme catalyses beta-D-fructose 1,6-bisphosphate = D-glyceraldehyde 3-phosphate + dihydroxyacetone phosphate. It participates in carbohydrate degradation; glycolysis; D-glyceraldehyde 3-phosphate and glycerone phosphate from D-glucose: step 4/4. Catalyzes the aldol condensation of dihydroxyacetone phosphate (DHAP or glycerone-phosphate) with glyceraldehyde 3-phosphate (G3P) to form fructose 1,6-bisphosphate (FBP) in gluconeogenesis and the reverse reaction in glycolysis. The chain is Fructose-bisphosphate aldolase (fba) from Streptomyces galbus.